A 211-amino-acid polypeptide reads, in one-letter code: ATP-dependent Clp protease proteolytic subunit (211 aa).

The active-site Nucleophile is the S107. The active site involves H132.

It belongs to the peptidase S14 family. In terms of assembly, fourteen ClpP subunits assemble into 2 heptameric rings which stack back to back to give a disk-like structure with a central cavity, resembling the structure of eukaryotic proteasomes.

It localises to the cytoplasm. The catalysed reaction is Hydrolysis of proteins to small peptides in the presence of ATP and magnesium. alpha-casein is the usual test substrate. In the absence of ATP, only oligopeptides shorter than five residues are hydrolyzed (such as succinyl-Leu-Tyr-|-NHMec, and Leu-Tyr-Leu-|-Tyr-Trp, in which cleavage of the -Tyr-|-Leu- and -Tyr-|-Trp bonds also occurs).. Its function is as follows. Cleaves peptides in various proteins in a process that requires ATP hydrolysis. Has a chymotrypsin-like activity. Plays a major role in the degradation of misfolded proteins. The polypeptide is ATP-dependent Clp protease proteolytic subunit (Xanthobacter autotrophicus (strain ATCC BAA-1158 / Py2)).